The sequence spans 280 residues: Succinate dehydrogenase [ubiquinone] iron-sulfur subunit, mitochondrial (280 aa).

A mitochondrion-targeting transit peptide spans 1 to 28 (MAAVVAVSLKRWFPATTLGGACLQACRG). The region spanning 40–131 (KKFAIYRWDP…DKVSKIYPLP (92 aa)) is the 2Fe-2S ferredoxin-type domain. 2 positions are modified to N6-acetyllysine: lysine 51 and lysine 55. Residues cysteine 93, cysteine 98, cysteine 101, and cysteine 113 each coordinate [2Fe-2S] cluster. Residues 146–218 (FYAQYKSIEP…PAVLMQAYRW (73 aa)) form an interaction with SDHAF1 region. The region spanning 176–206 (EREKLDGLYECILCACCSTSCPSYWWNGDKY) is the 4Fe-4S ferredoxin-type domain. Residues cysteine 186, cysteine 189, and cysteine 192 each contribute to the [4Fe-4S] cluster site. Position 196 (cysteine 196) interacts with [3Fe-4S] cluster. An a ubiquinone-binding site is contributed by tryptophan 201. [3Fe-4S] cluster contacts are provided by cysteine 243 and cysteine 249. Position 253 (cysteine 253) interacts with [4Fe-4S] cluster.

Belongs to the succinate dehydrogenase/fumarate reductase iron-sulfur protein family. In terms of assembly, component of complex II composed of four subunits: the flavoprotein (FP) SDHA, iron-sulfur protein (IP) SDHB, and a cytochrome b560 composed of SDHC and SDHD. Interacts with SDHAF1; the interaction is required for iron-sulfur cluster incorporation into SDHB. It depends on [2Fe-2S] cluster as a cofactor. Requires [3Fe-4S] cluster as cofactor. The cofactor is [4Fe-4S] cluster.

The protein resides in the mitochondrion inner membrane. The enzyme catalyses a quinone + succinate = fumarate + a quinol. It catalyses the reaction (R)-malate + a quinone = enol-oxaloacetate + a quinol. It carries out the reaction (S)-malate + a quinone = enol-oxaloacetate + a quinol. It participates in carbohydrate metabolism; tricarboxylic acid cycle; fumarate from succinate (eukaryal route): step 1/1. Its activity is regulated as follows. Enol-oxaloacetate inhibits the succinate dehydrogenase activity. Its function is as follows. Iron-sulfur protein (IP) subunit of the succinate dehydrogenase complex (mitochondrial respiratory chain complex II), responsible for transferring electrons from succinate to ubiquinone (coenzyme Q). SDH also oxidizes malate to the non-canonical enol form of oxaloacetate, enol-oxaloacetate. Enol-oxaloacetate, which is a potent inhibitor of the succinate dehydrogenase activity, is further isomerized into keto-oxaloacetate. The protein is Succinate dehydrogenase [ubiquinone] iron-sulfur subunit, mitochondrial (SDHB) of Sus scrofa (Pig).